Here is a 505-residue protein sequence, read N- to C-terminus: Bifunctional pantoate ligase/cytidylate kinase (505 aa).

Positions 1–268 (MHQWRKHQQS…CGETRLIDHT (268 aa)) are pantoate--beta-alanine ligase. 18–25 (MGALHRGH) provides a ligand contact to ATP. His-25 acts as the Proton donor in catalysis. A (R)-pantoate-binding site is contributed by Gln-53. Gln-53 contacts beta-alanine. 142–145 (GEKD) is a binding site for ATP. Residue Gln-148 participates in (R)-pantoate binding. Residues Val-171 and 179-182 (CSSR) each bind ATP. Positions 269 to 505 (FLMSRQPIVA…PEEVWPTAGR (237 aa)) are cytidylate kinase.

This sequence in the N-terminal section; belongs to the pantothenate synthetase family. The protein in the C-terminal section; belongs to the cytidylate kinase family. Type 1 subfamily.

It is found in the cytoplasm. It carries out the reaction (R)-pantoate + beta-alanine + ATP = (R)-pantothenate + AMP + diphosphate + H(+). The enzyme catalyses CMP + ATP = CDP + ADP. The catalysed reaction is dCMP + ATP = dCDP + ADP. It participates in cofactor biosynthesis; (R)-pantothenate biosynthesis; (R)-pantothenate from (R)-pantoate and beta-alanine: step 1/1. Its function is as follows. Catalyzes the condensation of pantoate with beta-alanine in an ATP-dependent reaction via a pantoyl-adenylate intermediate. In terms of biological role, catalyzes the transfer of a phosphate group from ATP to either CMP or dCMP to form CDP or dCDP and ADP, respectively. The chain is Bifunctional pantoate ligase/cytidylate kinase from Prochlorococcus marinus (strain MIT 9313).